The chain runs to 317 residues: 4-hydroxy-3-methylbut-2-enyl diphosphate reductase (317 aa).

Cysteine 12 serves as a coordination point for [4Fe-4S] cluster. Positions 41 and 74 each coordinate (2E)-4-hydroxy-3-methylbut-2-enyl diphosphate. 2 residues coordinate dimethylallyl diphosphate: histidine 41 and histidine 74. The isopentenyl diphosphate site is built by histidine 41 and histidine 74. Residue cysteine 96 coordinates [4Fe-4S] cluster. A (2E)-4-hydroxy-3-methylbut-2-enyl diphosphate-binding site is contributed by histidine 124. A dimethylallyl diphosphate-binding site is contributed by histidine 124. Histidine 124 serves as a coordination point for isopentenyl diphosphate. Residue glutamate 126 is the Proton donor of the active site. Threonine 168 provides a ligand contact to (2E)-4-hydroxy-3-methylbut-2-enyl diphosphate. Cysteine 198 provides a ligand contact to [4Fe-4S] cluster. The (2E)-4-hydroxy-3-methylbut-2-enyl diphosphate site is built by serine 226, serine 227, asparagine 228, and serine 270. Dimethylallyl diphosphate-binding residues include serine 226, serine 227, asparagine 228, and serine 270. Isopentenyl diphosphate contacts are provided by serine 226, serine 227, asparagine 228, and serine 270.

The protein belongs to the IspH family. It depends on [4Fe-4S] cluster as a cofactor.

The enzyme catalyses isopentenyl diphosphate + 2 oxidized [2Fe-2S]-[ferredoxin] + H2O = (2E)-4-hydroxy-3-methylbut-2-enyl diphosphate + 2 reduced [2Fe-2S]-[ferredoxin] + 2 H(+). The catalysed reaction is dimethylallyl diphosphate + 2 oxidized [2Fe-2S]-[ferredoxin] + H2O = (2E)-4-hydroxy-3-methylbut-2-enyl diphosphate + 2 reduced [2Fe-2S]-[ferredoxin] + 2 H(+). Its pathway is isoprenoid biosynthesis; dimethylallyl diphosphate biosynthesis; dimethylallyl diphosphate from (2E)-4-hydroxy-3-methylbutenyl diphosphate: step 1/1. It participates in isoprenoid biosynthesis; isopentenyl diphosphate biosynthesis via DXP pathway; isopentenyl diphosphate from 1-deoxy-D-xylulose 5-phosphate: step 6/6. Its function is as follows. Catalyzes the conversion of 1-hydroxy-2-methyl-2-(E)-butenyl 4-diphosphate (HMBPP) into a mixture of isopentenyl diphosphate (IPP) and dimethylallyl diphosphate (DMAPP). Acts in the terminal step of the DOXP/MEP pathway for isoprenoid precursor biosynthesis. The polypeptide is 4-hydroxy-3-methylbut-2-enyl diphosphate reductase (Chromohalobacter salexigens (strain ATCC BAA-138 / DSM 3043 / CIP 106854 / NCIMB 13768 / 1H11)).